A 389-amino-acid chain; its full sequence is 23S rRNA (uracil(747)-C(5))-methyltransferase RlmC (389 aa).

[4Fe-4S] cluster-binding residues include cysteine 5, cysteine 13, cysteine 16, and cysteine 94. 4 residues coordinate S-adenosyl-L-methionine: glutamine 219, phenylalanine 248, glutamate 275, and asparagine 321. Catalysis depends on cysteine 348, which acts as the Nucleophile.

Belongs to the class I-like SAM-binding methyltransferase superfamily. RNA M5U methyltransferase family. RlmC subfamily.

It catalyses the reaction uridine(747) in 23S rRNA + S-adenosyl-L-methionine = 5-methyluridine(747) in 23S rRNA + S-adenosyl-L-homocysteine + H(+). Catalyzes the formation of 5-methyl-uridine at position 747 (m5U747) in 23S rRNA. The chain is 23S rRNA (uracil(747)-C(5))-methyltransferase RlmC from Mannheimia succiniciproducens (strain KCTC 0769BP / MBEL55E).